A 502-amino-acid chain; its full sequence is Protein DETOXIFICATION 7 (502 aa).

12 helical membrane passes run 36-56 (MAAPMVAVSVSQFLLQVISMV), 68-88 (AVAIATSLTNVTGFSLIVGFA), 112-132 (YSSMLCLLVFCFSISIVWFFM), 143-163 (PLISQLACRYSIWLIPALFGF), 182-202 (LFVSSLGALCFHIPFCWLLVY), 208-228 (IVGAALSIGFSYWLNVFLLWI), 262-282 (AMMICLEWWSFEILLLMSGLL), 291-311 (VISICLTTSAVHFVLVNAIGA), 331-351 (AAVNSAIFLGGVGALITTITL), 375-395 (ITPILCLSIFVNSFLAVLSGV), 408-428 (ASLGSYYLVGIPLGWFLCFVM), and 436-456 (WIGILIASTIQLIVFALVTFF).

Belongs to the multi antimicrobial extrusion (MATE) (TC 2.A.66.1) family.

The protein localises to the membrane. The sequence is that of Protein DETOXIFICATION 7 from Arabidopsis thaliana (Mouse-ear cress).